The following is a 306-amino-acid chain: B- and T-lymphocyte attenuator (306 aa).

Positions 1–29 (MKTVPAMLGTPRLFREFFILHLGLWSILC) are cleaved as a signal peptide. The Extracellular segment spans residues 30–183 (EKATKRNDEE…ERPGRTWLLY (154 aa)). The region spanning 37 to 139 (DEECPVQLTI…SQVINSHSVT (103 aa)) is the Ig-like V-type domain. 3 cysteine pairs are disulfide-bonded: Cys-40/Cys-69, Cys-64/Cys-124, and Cys-78/Cys-85. 6 N-linked (GlcNAc...) asparagine glycosylation sites follow: Asn-74, Asn-81, Asn-101, Asn-119, Asn-148, and Asn-165. A helical membrane pass occupies residues 184 to 204 (TLLPLGALLLLLACVCLLCFL). Residues 205–306 (KRIQGKEKKP…TEYASICVRS (102 aa)) lie on the Cytoplasmic side of the membrane.

As to quaternary structure, interacts with tyrosine phosphatases PTPN6/SHP-1 and PTPN11/SHP-2. Interacts with TNFRSF14/HVEM (via cysteine-rich domain 1). In terms of processing, phosphorylated on Tyr residues by TNFRSF14 and by antigen receptors cross-linking, both inducing association with PTPN6 and PTPN11. N-glycosylated. As to expression, expressed in splenic T- and B-cells as well as lymph node tissues but very weakly in somatic tissues. Also expressed in macrophages, NK cells and dendritic cells. A polymorphic tissue distribution between several strains is seen.

The protein resides in the cell membrane. Functionally, inhibitory receptor on lymphocytes that negatively regulates antigen receptor signaling via PTPN6/SHP-1 and PTPN11/SHP-2. May interact in cis (on the same cell) or in trans (on other cells) with TNFRSF14. In cis interactions, appears to play an immune regulatory role inhibiting in trans interactions in naive T cells to maintain a resting state. In trans interactions, can predominate during adaptive immune response to provide survival signals to effector T cells. This Mus musculus (Mouse) protein is B- and T-lymphocyte attenuator.